A 299-amino-acid polypeptide reads, in one-letter code: Taste receptor type 2 member 1 (299 aa).

At 1–9 (MLESHLIIY) the chain is on the extracellular side. A helical transmembrane segment spans residues 10 to 30 (FLLAVIQFLLGTFTNGIIVVV). Topologically, residues 31–55 (NGIDLIKHRKMAPLDLLLSCLAVSR) are cytoplasmic. The chain crosses the membrane as a helical span at residues 56 to 76 (IFLQLFIFYINVVVIFLIEFI). At 77–81 (TCSAS) the chain is on the extracellular side. A helical membrane pass occupies residues 82-102 (CAFLVFVNELELWLATWLGVF). Residues 103-124 (YCAKVASVLHPLFIWLKMRISK) lie on the Cytoplasmic side of the membrane. A helical membrane pass occupies residues 125–145 (SVPWMILGSLLYVSMICIFHI). Topologically, residues 146–178 (KYTGFMVPYFLRNLFFQNATIQTEVKQAIQIFS) are extracellular. Residue N163 is glycosylated (N-linked (GlcNAc...) asparagine). The helical transmembrane segment at 179 to 199 (FVAELLVPLLIFLVAVLLLIF) threads the bilayer. At 200-222 (SLGRHTRQMRNTVAGSRVPGRGA) the chain is on the cytoplasmic side. A helical membrane pass occupies residues 223-243 (HISALLSILSFLILYISHYLI). The Extracellular portion of the chain corresponds to 244–257 (KTFLSSLKFHVKRF). Residues 258–278 (VFLFCILVIGTYPSGHSLILI) form a helical membrane-spanning segment. Residues 279-299 (LGNPKLKQNTKKFLCHSKCCQ) lie on the Cytoplasmic side of the membrane.

It belongs to the G-protein coupled receptor T2R family.

The protein localises to the membrane. Its function is as follows. Receptor that may play a role in the perception of bitterness and is gustducin-linked. May play a role in sensing the chemical composition of the gastrointestinal content. The activity of this receptor may stimulate alpha gustducin, mediate PLC-beta-2 activation and lead to the gating of TRPM5. The protein is Taste receptor type 2 member 1 (TAS2R1) of Chlorocebus aethiops (Green monkey).